Reading from the N-terminus, the 568-residue chain is 2-succinyl-5-enolpyruvyl-6-hydroxy-3-cyclohexene-1-carboxylate synthase (568 aa).

This sequence belongs to the TPP enzyme family. MenD subfamily. As to quaternary structure, homodimer. Requires Mg(2+) as cofactor. It depends on Mn(2+) as a cofactor. Thiamine diphosphate is required as a cofactor.

The enzyme catalyses isochorismate + 2-oxoglutarate + H(+) = 5-enolpyruvoyl-6-hydroxy-2-succinyl-cyclohex-3-ene-1-carboxylate + CO2. It functions in the pathway quinol/quinone metabolism; 1,4-dihydroxy-2-naphthoate biosynthesis; 1,4-dihydroxy-2-naphthoate from chorismate: step 2/7. It participates in quinol/quinone metabolism; menaquinone biosynthesis. Its function is as follows. Catalyzes the thiamine diphosphate-dependent decarboxylation of 2-oxoglutarate and the subsequent addition of the resulting succinic semialdehyde-thiamine pyrophosphate anion to isochorismate to yield 2-succinyl-5-enolpyruvyl-6-hydroxy-3-cyclohexene-1-carboxylate (SEPHCHC). The protein is 2-succinyl-5-enolpyruvyl-6-hydroxy-3-cyclohexene-1-carboxylate synthase of Actinobacillus pleuropneumoniae serotype 5b (strain L20).